The primary structure comprises 394 residues: MAKEKFERSKPHVNVGTIGHVDHGKTTLTAALTTILAKKFGGAAKAYDQIDNAPEEKARGITINTSHVEYETETRHYAHVDCPGHADYVKNMITGAAQMDGAILVCSAADGPMPQTREHILLARQVGVPYIIVFMNKCDMVDDAELLELVEMEIRDLLSSYDFPGDDCPIVQGSALKALEGDAAYEEKIFELAAALDSYIPTPERAVDKPFLLPIEDVFSISGRGTVVTGRVERGIIHVGDEIEIVGLKETQKTTCTGVEMFRKLLDEGQAGDNVGVLLRGTKREDVERGQVLAKPGTITPHTKFKAEVYVLSKEEGGRHTPFFANYRPQFYFRTTDVTGAVTLEEGVEMVMPGENVTITVELIAPIAMEEGLRFAIREGGRTVGAGVVSSVIA.

The tr-type G domain occupies 10-204 (KPHVNVGTIG…ALDSYIPTPE (195 aa)). Residues 19-26 (GHVDHGKT) are G1. 19–26 (GHVDHGKT) lines the GTP pocket. Threonine 26 is a Mg(2+) binding site. The interval 60 to 64 (GITIN) is G2. A G3 region spans residues 81–84 (DCPG). Residues 81–85 (DCPGH) and 136–139 (NKCD) each bind GTP. Residues 136-139 (NKCD) are G4. The segment at 174 to 176 (SAL) is G5.

It belongs to the TRAFAC class translation factor GTPase superfamily. Classic translation factor GTPase family. EF-Tu/EF-1A subfamily. In terms of assembly, monomer.

The protein resides in the cytoplasm. It catalyses the reaction GTP + H2O = GDP + phosphate + H(+). Functionally, GTP hydrolase that promotes the GTP-dependent binding of aminoacyl-tRNA to the A-site of ribosomes during protein biosynthesis. The polypeptide is Elongation factor Tu (Neisseria meningitidis serogroup A / serotype 4A (strain DSM 15465 / Z2491)).